Reading from the N-terminus, the 462-residue chain is NEDD8-activating enzyme E1 regulatory subunit (462 aa).

This sequence belongs to the ubiquitin-activating E1 family. ULA1 subfamily. Heterodimer of UBA3 and ULA1. The complex binds NEDD8 and UBC12.

The protein operates within protein modification; protein neddylation. Functionally, regulatory subunit of the dimeric UBA3-ULA1 E1 enzyme. E1 activates NEDD8/RUB1 by first adenylating its C-terminal glycine residue with ATP, thereafter linking this residue to the side chain of the catalytic cysteine, yielding a NEDD8-UBA3 thioester and free AMP. E1 finally transfers NEDD8 to the catalytic cysteine of UBC12. The protein is NEDD8-activating enzyme E1 regulatory subunit (ULA1) of Saccharomyces cerevisiae (strain ATCC 204508 / S288c) (Baker's yeast).